Consider the following 198-residue polypeptide: MRYVGRTLGIGLNNGKPFAFYLLCSRSFPNRRAVVKGNGVYILNQTETENPYVSYPVVRLMEDYAVVTNGLHTDFIAQALEWERPRKALVHVLDALDYERDDYSTPRIAGIIQHGGRRGWLGFVGRDMLWMRELELEEGKAFLTATYNMEGFESIELAFSTPEELAEKVMELPFEHKVLAIGIVENEKGWELSFTPSL.

This sequence belongs to the archaeal IMP cyclohydrolase family.

It carries out the reaction IMP + H2O = 5-formamido-1-(5-phospho-D-ribosyl)imidazole-4-carboxamide. It functions in the pathway purine metabolism; IMP biosynthesis via de novo pathway; IMP from 5-formamido-1-(5-phospho-D-ribosyl)imidazole-4-carboxamide: step 1/1. Its function is as follows. Catalyzes the cyclization of 5-formylamidoimidazole-4-carboxamide ribonucleotide to IMP. The protein is IMP cyclohydrolase of Thermococcus kodakarensis (strain ATCC BAA-918 / JCM 12380 / KOD1) (Pyrococcus kodakaraensis (strain KOD1)).